A 305-amino-acid polypeptide reads, in one-letter code: Ribonuclease BN (305 aa).

His-64, His-66, Asp-68, His-69, His-141, Asp-212, and His-270 together coordinate Zn(2+). The Proton acceptor role is filled by Asp-68.

Belongs to the RNase Z family. RNase BN subfamily. As to quaternary structure, homodimer. Zn(2+) serves as cofactor.

Its function is as follows. Zinc phosphodiesterase, which has both exoribonuclease and endoribonuclease activities. The polypeptide is Ribonuclease BN (Shigella boydii serotype 18 (strain CDC 3083-94 / BS512)).